The chain runs to 346 residues: Uroporphyrinogen decarboxylase (346 aa).

Residues 23–27 (RQAGR), aspartate 73, tyrosine 151, serine 206, and histidine 321 contribute to the substrate site.

This sequence belongs to the uroporphyrinogen decarboxylase family. As to quaternary structure, homodimer.

Its subcellular location is the cytoplasm. The catalysed reaction is uroporphyrinogen III + 4 H(+) = coproporphyrinogen III + 4 CO2. The protein operates within porphyrin-containing compound metabolism; protoporphyrin-IX biosynthesis; coproporphyrinogen-III from 5-aminolevulinate: step 4/4. Functionally, catalyzes the decarboxylation of four acetate groups of uroporphyrinogen-III to yield coproporphyrinogen-III. In Aliarcobacter butzleri (strain RM4018) (Arcobacter butzleri), this protein is Uroporphyrinogen decarboxylase.